We begin with the raw amino-acid sequence, 544 residues long: Putative glycerol-3-phosphate transporter 4 (544 aa).

Transmembrane regions (helical) follow at residues 28-47 (TFRYAILFITFIAYACYHAS), 121-141 (VAFLACYSIGMYVAGHLGDSL), 156-176 (FFVGLFGMGYFWNIHAFWFFL), 181-201 (AAGLFQATGWPSVVAVVGNWF), 218-238 (SVGNICGSLIAAGVLEYGWGW), and 240-260 (FIAPGFVMSLGGVLVYLFLAA). Positions 281–313 (KRDVEEEEEEVEEDLGTDVEGDGEGSSGSGSGY) are disordered. The span at 285–303 (EEEEEEVEEDLGTDVEGDG) shows a compositional bias: acidic residues. 7 helical membrane passes run 319–339 (VGLLQACMIPGVIPFALCLFF), 342–362 (LVAYTFLYWLPFYLSQTTIGG), 371–391 (GNLSTLFDVGGIVGGILCGYI), 402–422 (AAAFMYAAIPAMLVYHSYGGV), 428–448 (ILLMMVAGLFVNGPYALITTA), 471–491 (AIIDGTGSAGAALGPLLTGFL), and 494–514 (LGWQAVFYMLVVGALCAGLLL).

Belongs to the major facilitator superfamily. Organophosphate:Pi antiporter (OPA) (TC 2.A.1.4) family.

Its subcellular location is the membrane. This chain is Putative glycerol-3-phosphate transporter 4, found in Arabidopsis thaliana (Mouse-ear cress).